A 30-amino-acid chain; its full sequence is VIGGDECNINEHRFLVALYDPDGFFCGGTL.

It belongs to the peptidase S1 family. Snake venom subfamily. Expressed by the venom gland.

Its subcellular location is the secreted. In terms of biological role, thrombin-like snake venom serine protease that cleaves alpha-chain of fibrinogen (FGA) releases only fibrinopeptide A. Shows coagulant, esterase and amidase activities. This chain is Thrombin-like enzyme LmrSP-2, found in Lachesis muta rhombeata (Bushmaster).